Here is a 922-residue protein sequence, read N- to C-terminus: Isoleucine--tRNA ligase (922 aa).

The short motif at 57–67 is the 'HIGH' region element; the sequence is PYANGDIHMGH. E553 lines the L-isoleucyl-5'-AMP pocket. A 'KMSKS' region motif is present at residues 594-598; sequence KMSKS. K597 is a binding site for ATP. Zn(2+)-binding residues include C889, C892, C909, and C912.

The protein belongs to the class-I aminoacyl-tRNA synthetase family. IleS type 1 subfamily. As to quaternary structure, monomer. The cofactor is Zn(2+).

It localises to the cytoplasm. The enzyme catalyses tRNA(Ile) + L-isoleucine + ATP = L-isoleucyl-tRNA(Ile) + AMP + diphosphate. In terms of biological role, catalyzes the attachment of isoleucine to tRNA(Ile). As IleRS can inadvertently accommodate and process structurally similar amino acids such as valine, to avoid such errors it has two additional distinct tRNA(Ile)-dependent editing activities. One activity is designated as 'pretransfer' editing and involves the hydrolysis of activated Val-AMP. The other activity is designated 'posttransfer' editing and involves deacylation of mischarged Val-tRNA(Ile). This chain is Isoleucine--tRNA ligase, found in Bacillus licheniformis (strain ATCC 14580 / DSM 13 / JCM 2505 / CCUG 7422 / NBRC 12200 / NCIMB 9375 / NCTC 10341 / NRRL NRS-1264 / Gibson 46).